The primary structure comprises 199 residues: GTP cyclohydrolase-2 (199 aa).

49–53 (RIHSE) contributes to the GTP binding site. 3 residues coordinate Zn(2+): cysteine 54, cysteine 65, and cysteine 67. Residues glutamine 70, 92 to 94 (EGR), and threonine 114 each bind GTP. Aspartate 126 serves as the catalytic Proton acceptor. The Nucleophile role is filled by arginine 128. GTP is bound by residues threonine 149 and lysine 154.

This sequence belongs to the GTP cyclohydrolase II family. As to quaternary structure, homodimer. Zn(2+) serves as cofactor.

The catalysed reaction is GTP + 4 H2O = 2,5-diamino-6-hydroxy-4-(5-phosphoribosylamino)-pyrimidine + formate + 2 phosphate + 3 H(+). The protein operates within cofactor biosynthesis; riboflavin biosynthesis; 5-amino-6-(D-ribitylamino)uracil from GTP: step 1/4. In terms of biological role, catalyzes the conversion of GTP to 2,5-diamino-6-ribosylamino-4(3H)-pyrimidinone 5'-phosphate (DARP), formate and pyrophosphate. The chain is GTP cyclohydrolase-2 from Blochmanniella pennsylvanica (strain BPEN).